The following is a 249-amino-acid chain: ATP synthase subunit a (249 aa).

6 helical membrane passes run 30–50 (SLYMLLAVGAVALLMLGGSAG), 84–104 (FFPLVFSIFMFVLMANLIGVI), 114–134 (LIVTVALALIVFLTVLLYGLY), 143–163 (VFVPSGVPIYILPLIAMIEVI), 193–213 (FVTSLGALGVAGIAGAALPLA), and 220–240 (ILEVLVALLQAYVFAILTCIY).

This sequence belongs to the ATPase A chain family. As to quaternary structure, F-type ATPases have 2 components, CF(1) - the catalytic core - and CF(0) - the membrane proton channel. CF(1) has five subunits: alpha(3), beta(3), gamma(1), delta(1), epsilon(1). CF(0) has three main subunits: a(1), b(2) and c(9-12). The alpha and beta chains form an alternating ring which encloses part of the gamma chain. CF(1) is attached to CF(0) by a central stalk formed by the gamma and epsilon chains, while a peripheral stalk is formed by the delta and b chains.

Its subcellular location is the cell inner membrane. Its function is as follows. Key component of the proton channel; it plays a direct role in the translocation of protons across the membrane. The protein is ATP synthase subunit a of Afipia carboxidovorans (strain ATCC 49405 / DSM 1227 / KCTC 32145 / OM5) (Oligotropha carboxidovorans).